The following is a 323-amino-acid chain: Methionyl-tRNA formyltransferase (323 aa).

121–124 is a binding site for (6S)-5,6,7,8-tetrahydrofolate; the sequence is SLLP.

Belongs to the Fmt family.

The enzyme catalyses L-methionyl-tRNA(fMet) + (6R)-10-formyltetrahydrofolate = N-formyl-L-methionyl-tRNA(fMet) + (6S)-5,6,7,8-tetrahydrofolate + H(+). In terms of biological role, attaches a formyl group to the free amino group of methionyl-tRNA(fMet). The formyl group appears to play a dual role in the initiator identity of N-formylmethionyl-tRNA by promoting its recognition by IF2 and preventing the misappropriation of this tRNA by the elongation apparatus. The chain is Methionyl-tRNA formyltransferase from Desulfotalea psychrophila (strain LSv54 / DSM 12343).